The sequence spans 373 residues: Putative glutamate--cysteine ligase 2-1 (373 aa).

The protein belongs to the glutamate--cysteine ligase type 2 family. YbdK subfamily.

The catalysed reaction is L-cysteine + L-glutamate + ATP = gamma-L-glutamyl-L-cysteine + ADP + phosphate + H(+). In terms of biological role, ATP-dependent carboxylate-amine ligase which exhibits weak glutamate--cysteine ligase activity. In Legionella pneumophila (strain Paris), this protein is Putative glutamate--cysteine ligase 2-1.